A 400-amino-acid polypeptide reads, in one-letter code: Elongation factor Tu 1 (400 aa).

In terms of domain architecture, tr-type G spans 10–209; it reads KPHVNIGTIG…AVDEYIPTPQ (200 aa). The interval 19-26 is G1; the sequence is GHVDHGKT. GTP is bound at residue 19 to 26; that stretch reads GHVDHGKT. Position 26 (Thr26) interacts with Mg(2+). A G2 region spans residues 60–64; it reads GITIN. Residues 81–84 are G3; sequence DCPG. GTP is bound by residues 81 to 85 and 136 to 139; these read DCPGH and NKAD. The segment at 136 to 139 is G4; it reads NKAD. Residues 174-176 are G5; sequence SAL.

It belongs to the TRAFAC class translation factor GTPase superfamily. Classic translation factor GTPase family. EF-Tu/EF-1A subfamily. In terms of assembly, monomer.

The protein resides in the cytoplasm. The catalysed reaction is GTP + H2O = GDP + phosphate + H(+). Its function is as follows. GTP hydrolase that promotes the GTP-dependent binding of aminoacyl-tRNA to the A-site of ribosomes during protein biosynthesis. This chain is Elongation factor Tu 1, found in Pelotomaculum thermopropionicum (strain DSM 13744 / JCM 10971 / SI).